The primary structure comprises 332 residues: Sphingolipid delta(4)-desaturase DES1-like (332 aa).

3 helical membrane passes run 55–75 (PWAF…AAIL), 83–103 (ILSI…LAIH), and 119–139 (CLGI…FQKY). A Histidine box-1 motif is present at residues 103-107 (HELSH). The Histidine box-2 motif lies at 140–144 (HLEHH). 3 consecutive transmembrane segments (helical) span residues 164–184 (LVTN…FYAL), 197–217 (WEFI…LFFG), and 222–242 (AYLI…GHFI). A Histidine box-3 motif is present at residues 271–275 (HNEHH).

The protein belongs to the fatty acid desaturase type 1 family. DEGS subfamily. Specifically expressed in flowers.

It is found in the endoplasmic reticulum membrane. The enzyme catalyses an N-acylsphinganine + 2 Fe(II)-[cytochrome b5] + O2 + 2 H(+) = an N-acylsphing-4-enine + 2 Fe(III)-[cytochrome b5] + 2 H2O. In terms of biological role, sphingolipid-delta-4-desaturase required for the biosynthesis of delta-4-unsaturated sphingolipids and derivatives. May be required for the biosynthesis of glucosylceramides. The protein is Sphingolipid delta(4)-desaturase DES1-like of Arabidopsis thaliana (Mouse-ear cress).